Reading from the N-terminus, the 75-residue chain is SPbeta prophage-derived uncharacterized protein YorX (75 aa).

The protein is SPbeta prophage-derived uncharacterized protein YorX (yorX) of Bacillus subtilis (strain 168).